The following is a 417-amino-acid chain: Serine--tRNA ligase (417 aa).

Position 226–228 (226–228 (TSE)) interacts with L-serine. Residues 257 to 259 (RRE) and Val273 contribute to the ATP site. An L-serine-binding site is contributed by Glu280. Residue 344–347 (ELTS) participates in ATP binding. L-serine is bound at residue Thr379.

It belongs to the class-II aminoacyl-tRNA synthetase family. Type-1 seryl-tRNA synthetase subfamily. As to quaternary structure, homodimer. The tRNA molecule binds across the dimer.

It localises to the cytoplasm. It carries out the reaction tRNA(Ser) + L-serine + ATP = L-seryl-tRNA(Ser) + AMP + diphosphate + H(+). It catalyses the reaction tRNA(Sec) + L-serine + ATP = L-seryl-tRNA(Sec) + AMP + diphosphate + H(+). Its pathway is aminoacyl-tRNA biosynthesis; selenocysteinyl-tRNA(Sec) biosynthesis; L-seryl-tRNA(Sec) from L-serine and tRNA(Sec): step 1/1. In terms of biological role, catalyzes the attachment of serine to tRNA(Ser). Is also able to aminoacylate tRNA(Sec) with serine, to form the misacylated tRNA L-seryl-tRNA(Sec), which will be further converted into selenocysteinyl-tRNA(Sec). This Mycobacterium sp. (strain KMS) protein is Serine--tRNA ligase.